The following is a 38-amino-acid chain: Cytochrome b6-f complex subunit 5 (38 aa).

A helical transmembrane segment spans residues 5–25; the sequence is LLLGIVLGLIPITLAGLFVAA.

Belongs to the PetG family. In terms of assembly, the 4 large subunits of the cytochrome b6-f complex are cytochrome b6, subunit IV (17 kDa polypeptide, PetD), cytochrome f and the Rieske protein, while the 4 small subunits are PetG, PetL, PetM and PetN. The complex functions as a dimer.

The protein localises to the cellular thylakoid membrane. Its function is as follows. Component of the cytochrome b6-f complex, which mediates electron transfer between photosystem II (PSII) and photosystem I (PSI), cyclic electron flow around PSI, and state transitions. PetG is required for either the stability or assembly of the cytochrome b6-f complex. This chain is Cytochrome b6-f complex subunit 5, found in Rippkaea orientalis (strain PCC 8801 / RF-1) (Cyanothece sp. (strain PCC 8801)).